Consider the following 100-residue polypeptide: Small ribosomal subunit protein uS14c (100 aa).

This sequence belongs to the universal ribosomal protein uS14 family. As to quaternary structure, part of the 30S ribosomal subunit.

The protein localises to the plastid. Its subcellular location is the chloroplast. Binds 16S rRNA, required for the assembly of 30S particles. This chain is Small ribosomal subunit protein uS14c, found in Porphyra purpurea (Red seaweed).